Here is a 360-residue protein sequence, read N- to C-terminus: Protein Wnt-2 (360 aa).

The signal sequence occupies residues 1 to 25 (MNAPLGGIWPWLPLLLTWLTPEVSS). Disulfide bonds link Cys-76–Cys-87, Cys-127–Cys-135, Cys-137–Cys-157, Cys-206–Cys-220, Cys-208–Cys-215, Cys-278–Cys-309, Cys-294–Cys-304, Cys-308–Cys-348, Cys-324–Cys-339, Cys-326–Cys-336, and Cys-331–Cys-332. Ser-212 carries the O-palmitoleoyl serine; by PORCN lipid modification. N-linked (GlcNAc...) asparagine glycosylation occurs at Asn-295.

It belongs to the Wnt family. Palmitoleoylation is required for efficient binding to frizzled receptors. Depalmitoleoylation leads to Wnt signaling pathway inhibition.

The protein resides in the secreted. The protein localises to the extracellular space. It localises to the extracellular matrix. Ligand for members of the frizzled family of seven transmembrane receptors. Functions in the canonical Wnt signaling pathway that results in activation of transcription factors of the TCF/LEF family. Functions as a upstream regulator of FGF10 expression. Plays an important role in embryonic lung development. May contribute to embryonic brain development by regulating the proliferation of dopaminergic precursors and neurons. In Felis catus (Cat), this protein is Protein Wnt-2 (WNT2).